A 228-amino-acid polypeptide reads, in one-letter code: Delta-type opioid receptor (228 aa).

A helical transmembrane segment spans residues Gly-1 to Val-3. Residues Arg-4–Asn-13 are Cytoplasmic-facing. A helical membrane pass occupies residues Ile-14 to Leu-38. The Extracellular segment spans residues Met-39–Lys-50. Cysteines 49 and 126 form a disulfide. A helical transmembrane segment spans residues Ala-51–Val-72. The Cytoplasmic segment spans residues Asp-73–Ala-91. A helical transmembrane segment spans residues Lys-92 to Met-114. At Ala-115–Ser-134 the chain is on the extracellular side. Residues Trp-135–Leu-166 traverse the membrane as a helical segment. Over Arg-167–Arg-189 the chain is Cytoplasmic. The chain crosses the membrane as a helical span at residues Met-190–Trp-212. At Thr-213–Ala-227 the chain is on the extracellular side.

This sequence belongs to the G-protein coupled receptor 1 family. May form homooligomers. Forms a heterodimer with OPRM1. Interacts with GPRASP1. Interacts with RTP4; the interaction promotes cell surface localization of the OPRD1-OPRM1 heterodimer. Post-translationally, ubiquitinated. A basal ubiquitination seems not to be related to degradation. Ubiquitination is increased upon formation of OPRM1:OPRD1 oligomers leading to proteasomal degradation; the ubiquitination is diminished by RTP4. As to expression, detected in myenteric plexus and smooth muscle (at protein level). Detected in brain and intestine.

Its subcellular location is the cell membrane. In terms of biological role, G-protein coupled receptor that functions as a receptor for endogenous enkephalins and for a subset of other opioids. Ligand binding causes a conformation change that triggers signaling via guanine nucleotide-binding proteins (G proteins) and modulates the activity of down-stream effectors, such as adenylate cyclase. Signaling leads to the inhibition of adenylate cyclase activity. Inhibits neurotransmitter release by reducing calcium ion currents and increasing potassium ion conductance. Plays a role in the perception of pain and in opiate-mediated analgesia. Plays a role in developing analgesic tolerance to morphine. This Sus scrofa (Pig) protein is Delta-type opioid receptor (OPRD1).